We begin with the raw amino-acid sequence, 90 residues long: Protein A54 (90 aa).

In Homo sapiens (Human), this protein is Protein A54.